A 347-amino-acid polypeptide reads, in one-letter code: Protein RecA (347 aa).

Residue 67–74 coordinates ATP; it reads GPESSGKT.

The protein belongs to the RecA family.

The protein resides in the cytoplasm. Functionally, can catalyze the hydrolysis of ATP in the presence of single-stranded DNA, the ATP-dependent uptake of single-stranded DNA by duplex DNA, and the ATP-dependent hybridization of homologous single-stranded DNAs. It interacts with LexA causing its activation and leading to its autocatalytic cleavage. This chain is Protein RecA, found in Helicobacter pylori (strain HPAG1).